A 20-amino-acid chain; its full sequence is Cytochrome c oxidase subunit 7B-heart, mitochondrial (20 aa).

This sequence belongs to the cytochrome c oxidase VIIb family. In terms of assembly, component of the cytochrome c oxidase (complex IV, CIV), a multisubunit enzyme composed of 14 subunits. The complex is composed of a catalytic core of 3 subunits MT-CO1, MT-CO2 and MT-CO3, encoded in the mitochondrial DNA, and 11 supernumerary subunits COX4I, COX5A, COX5B, COX6A, COX6B, COX6C, COX7A, COX7B, COX7C, COX8 and NDUFA4, which are encoded in the nuclear genome. The complex exists as a monomer or a dimer and forms supercomplexes (SCs) in the inner mitochondrial membrane with NADH-ubiquinone oxidoreductase (complex I, CI) and ubiquinol-cytochrome c oxidoreductase (cytochrome b-c1 complex, complex III, CIII), resulting in different assemblies (supercomplex SCI(1)III(2)IV(1) and megacomplex MCI(2)III(2)IV(2)).

The protein resides in the mitochondrion inner membrane. The catalysed reaction is 4 Fe(II)-[cytochrome c] + O2 + 8 H(+)(in) = 4 Fe(III)-[cytochrome c] + 2 H2O + 4 H(+)(out). The protein operates within energy metabolism; oxidative phosphorylation. Its function is as follows. Component of the cytochrome c oxidase, the last enzyme in the mitochondrial electron transport chain which drives oxidative phosphorylation. The respiratory chain contains 3 multisubunit complexes succinate dehydrogenase (complex II, CII), ubiquinol-cytochrome c oxidoreductase (cytochrome b-c1 complex, complex III, CIII) and cytochrome c oxidase (complex IV, CIV), that cooperate to transfer electrons derived from NADH and succinate to molecular oxygen, creating an electrochemical gradient over the inner membrane that drives transmembrane transport and the ATP synthase. Cytochrome c oxidase is the component of the respiratory chain that catalyzes the reduction of oxygen to water. Electrons originating from reduced cytochrome c in the intermembrane space (IMS) are transferred via the dinuclear copper A center (CU(A)) of subunit 2 and heme A of subunit 1 to the active site in subunit 1, a binuclear center (BNC) formed by heme A3 and copper B (CU(B)). The BNC reduces molecular oxygen to 2 water molecules using 4 electrons from cytochrome c in the IMS and 4 protons from the mitochondrial matrix. In Thunnus obesus (Bigeye tuna), this protein is Cytochrome c oxidase subunit 7B-heart, mitochondrial.